The chain runs to 402 residues: S-adenosylmethionine synthase (402 aa).

H15 is an ATP binding site. D17 is a Mg(2+) binding site. Position 43 (E43) interacts with K(+). Residues E56 and Q99 each coordinate L-methionine. Positions 99-109 are flexible loop; the sequence is QSPDIAQGVDT. Residues 174–176, 247–248, D256, 262–263, A279, and K283 contribute to the ATP site; these read DGK, RF, and RK. L-methionine is bound at residue D256. Residue K287 participates in L-methionine binding.

It belongs to the AdoMet synthase family. As to quaternary structure, homotetramer; dimer of dimers. Requires Mg(2+) as cofactor. It depends on K(+) as a cofactor.

The protein localises to the cytoplasm. The enzyme catalyses L-methionine + ATP + H2O = S-adenosyl-L-methionine + phosphate + diphosphate. It functions in the pathway amino-acid biosynthesis; S-adenosyl-L-methionine biosynthesis; S-adenosyl-L-methionine from L-methionine: step 1/1. Catalyzes the formation of S-adenosylmethionine (AdoMet) from methionine and ATP. The overall synthetic reaction is composed of two sequential steps, AdoMet formation and the subsequent tripolyphosphate hydrolysis which occurs prior to release of AdoMet from the enzyme. This chain is S-adenosylmethionine synthase, found in Streptomyces avermitilis (strain ATCC 31267 / DSM 46492 / JCM 5070 / NBRC 14893 / NCIMB 12804 / NRRL 8165 / MA-4680).